The following is a 504-amino-acid chain: ATP synthase subunit alpha 2 (504 aa).

169–176 (GDRQTGKT) is a binding site for ATP.

This sequence belongs to the ATPase alpha/beta chains family. F-type ATPases have 2 components, CF(1) - the catalytic core - and CF(0) - the membrane proton channel. CF(1) has five subunits: alpha(3), beta(3), gamma(1), delta(1), epsilon(1). CF(0) has three main subunits: a(1), b(2) and c(9-12). The alpha and beta chains form an alternating ring which encloses part of the gamma chain. CF(1) is attached to CF(0) by a central stalk formed by the gamma and epsilon chains, while a peripheral stalk is formed by the delta and b chains.

The protein resides in the cell membrane. The enzyme catalyses ATP + H2O + 4 H(+)(in) = ADP + phosphate + 5 H(+)(out). In terms of biological role, produces ATP from ADP in the presence of a proton gradient across the membrane. The alpha chain is a regulatory subunit. This chain is ATP synthase subunit alpha 2, found in Listeria monocytogenes serovar 1/2a (strain ATCC BAA-679 / EGD-e).